The following is a 704-amino-acid chain: MTVDHDFNSEDILFPIESMSSIQYVENNNPNNINNDVIPYSLDIKNTVLDSADLNDIQNQETSLNLGLPPLSFDSPLPVTETIPSTTDNSLHLKADSNKNRDARTIENDSEIKSTNNASGSGANQYTTLTSPYPMNDILYNMNNPLQSPSPSSVPQNPTINPPINTASNETNLSPQTSNGNETLISPRAQQHTSIKDNRLSLPNGANSNLFIDTNPNNLNEKLRNQLNSDTNSYSNSISNSNSNSTGNLNSSYFNSLNIDSMLDDYVSSDLLLNDDDDDTNLSRRRFSDVITNQFPSMTNSRNSISHSLDLWNHPKINPSNRNTNLNITTNSTSSSNASPNTTTMNANADSNIAGNPKNNDATIDNELTQILNEYNMNFNDNLGTSTSGKNKSACPSSFDANAMTKINPSQQLQQQLNRVQHKQLTSSHNNSSTNMKSFNSDLYSRRQRASLPIIDDSLSYDLVNKQDEDPKNDMLPNSNLSSSQQFIKPSMILSDNASVIAKVATTGLSNDMPFLTEEGEQNANSTPNFDLSITQMNMAPLSPASSSSTSLATNHFYHHFPQQGHHTMNSKIGSSLRRRKSAVPLMGTVPLTNQQNNISSSSVNSTGNGAGVTKERRPSYRRKSMTPSRRSSVVIESTKELEEKPFHCHICPKSFKRSEHLKRHVRSVHSNERPFACHICDKKFSRSDNLSQHIKTHKKHGDI.

The tract at residues 84-246 (PSTTDNSLHL…SISNSNSNST (163 aa)) is disordered. A compositionally biased stretch (basic and acidic residues) spans 91–112 (LHLKADSNKNRDARTIENDSEI). Residues 113 to 133 (KSTNNASGSGANQYTTLTSPY) are compositionally biased toward polar residues. Over residues 141 to 166 (NMNNPLQSPSPSSVPQNPTINPPINT) the composition is skewed to low complexity. Polar residues-rich tracts occupy residues 167 to 193 (ASNETNLSPQTSNGNETLISPRAQQHT) and 204 to 220 (NGANSNLFIDTNPNNLN). Positions 228–246 (NSDTNSYSNSISNSNSNST) are enriched in low complexity. The 9aaTAD motif lies at 261 to 269 (SMLDDYVSS). A phosphoserine mark is found at Ser-288 and Ser-304. Positions 418–437 (NRVQHKQLTSSHNNSSTNMK) are disordered. The segment covering 426-437 (TSSHNNSSTNMK) has biased composition (polar residues). Residues Ser-451 and Ser-582 each carry the phosphoserine modification. Positions 592 to 634 (LTNQQNNISSSSVNSTGNGAGVTKERRPSYRRKSMTPSRRSSV) are disordered. Residues 593-608 (TNQQNNISSSSVNSTG) are compositionally biased toward low complexity. Ser-633 is subject to Phosphoserine. 2 C2H2-type zinc fingers span residues 647 to 665 (FHCHICPKSFKRSEHLKRH) and 676 to 698 (FACHICDKKFSRSDNLSQHIKTH).

In terms of assembly, interacts with WHI2.

It localises to the cytoplasm. It is found in the nucleus. Its function is as follows. Positive transcriptional factor that acts as a component of the stress responsive system. Recognizes and binds to the stress response element (STRE) which is involved in the response to various forms of stress (heat, oxidative, osmotic, etc.). Involved in the regulation of the CTT1, DDR2, HSP12 genes. May be regulated via WHI2-PSR1 complex phosphatase activity. The sequence is that of Zinc finger protein MSN2 (MSN2) from Saccharomyces cerevisiae (strain ATCC 204508 / S288c) (Baker's yeast).